The primary structure comprises 410 residues: O-methyltransferase afvC (410 aa).

S-adenosyl-L-methionine contacts are provided by residues 253 to 254 (GG), Asp278, 299 to 300 (DF), and Arg315. His319 functions as the Proton acceptor in the catalytic mechanism.

The protein belongs to the class I-like SAM-binding methyltransferase superfamily. Cation-independent O-methyltransferase family. COMT subfamily.

It participates in secondary metabolite biosynthesis. In terms of biological role, O-methyltransferase; part of the gene cluster that mediates the biosynthesis of aflavarin, a bicoumarin that exhibits anti-insectan activity against the fungivorous beetle C.hemipterus. The polypeptide is O-methyltransferase afvC (Aspergillus flavus (strain ATCC 200026 / FGSC A1120 / IAM 13836 / NRRL 3357 / JCM 12722 / SRRC 167)).